The chain runs to 1522 residues: Sodium channel protein 1 brain (1522 aa).

Residues 1-50 lie on the Cytoplasmic side of the membrane; it reads MDEKYTAKNRDKTFVVIEKRFKKNIIHRFSAKRSLFLFTPRNPIRRLAVC. The I repeat unit spans residues 41–342; sequence RNPIRRLAVC…VATAYELEVK (302 aa). The helical transmembrane segment at 51-70 threads the bilayer; that stretch reads IATNVCFDYFLMFTIMINCV. The Extracellular segment spans residues 71 to 77; that stretch reads FLAMPDI. The helical transmembrane segment at 78-99 threads the bilayer; the sequence is SEFAEYIFLGIYTMEMAIKLVA. Residues 100 to 112 lie on the Cytoplasmic side of the membrane; sequence GGFFIDKYTYLRD. Residues 113–134 traverse the membrane as a helical segment; sequence AWNCLDFTVIMISYITLLLQTI. Residues 135-143 are Extracellular-facing; that stretch reads NDKVISDIT. The chain crosses the membrane as a helical; Voltage-sensor span at residues 144-167; sequence GLRTFRVLRALRTLSIIPGLKTMV. The Cytoplasmic portion of the chain corresponds to 168–179; it reads NALLRALRMLIS. A helical transmembrane segment spans residues 180–201; that stretch reads VLILILFCLWIFSQAGVQLFGG. The Extracellular portion of the chain corresponds to 202 to 278; sequence ALRHKCVLQI…PNYGYTNFDS (77 aa). A disulfide bridge links Cys-207 with Cys-255. N-linked (GlcNAc...) asparagine glycosylation is found at Asn-248 and Asn-258. Positions 279-303 form an intramembrane region, pore-forming; that stretch reads IGWSMLISFQLLTQDYWEDVYNKVI. Over 304 to 308 the chain is Extracellular; it reads RAHSP. Residues 309-331 traverse the membrane as a helical segment; that stretch reads WTVIYFIVINFFGSLYLMNLMLA. Over 332–406 the chain is Cytoplasmic; sequence VVATAYELEV…WLRVQSFAHC (75 aa). The II repeat unit spans residues 393–647; that stretch reads CYNPWLRVQS…EQEVEVSSFA (255 aa). Residues 407–426 form a helical membrane-spanning segment; the sequence is IITDSFTEVFIIFIIVLNTV. Residues 427–442 are Extracellular-facing; the sequence is FLAMEHHGMSMELKNV. Residues 443-464 traverse the membrane as a helical segment; the sequence is LKVANYVFTTVFVLEAILKLLA. The Cytoplasmic portion of the chain corresponds to 465-472; the sequence is FNKQYFKS. Residues 473–491 form a helical membrane-spanning segment; sequence GWNICDLVVVVASLIDLGV. The Extracellular portion of the chain corresponds to 492–498; it reads EGLKGVS. The chain crosses the membrane as a helical; Voltage-sensor span at residues 499 to 522; the sequence is VFRSFRLLRVFHLAQSWTTMRLLL. The Cytoplasmic segment spans residues 523–531; it reads CIILNTLGS. A helical transmembrane segment spans residues 532 to 553; that stretch reads LGYLTIILIIVIYIFAVTGLQL. At 554 to 575 the chain is on the extracellular side; sequence FHTEYTPDKFRGEPVPRWNFND. Positions 576–596 form an intramembrane region, pore-forming; the sequence is FLHSFMMVFRILCGEWIEPMY. The Extracellular portion of the chain corresponds to 597–607; sequence DCMRACNGLCF. An intrachain disulfide couples Cys-598 to Cys-606. The helical transmembrane segment at 608–628 threads the bilayer; sequence LIFIPVTVFGKTLFFLFIGLV. Residues 629–777 lie on the Cytoplasmic side of the membrane; that stretch reads LGAFGSDTVE…WNNFRRQLMM (149 aa). The stretch at 770-1074 is one III repeat; that stretch reads NFRRQLMMVC…QNYYNTLKKL (305 aa). Residues 778–797 traverse the membrane as a helical segment; the sequence is VCENKYFETGVLVIIFASSI. The Extracellular segment spans residues 798–815; it reads LLAFEDIYLNEKPRLKLA. Residues 816 to 837 traverse the membrane as a helical segment; that stretch reads IFYLDITFCLLFFLEMVLKLVA. At 838–846 the chain is on the cytoplasmic side; sequence LGFVHYYTH. Residues 847-868 form a helical membrane-spanning segment; that stretch reads FWTILDFTIVIITVISLAASGL. Over 869-874 the chain is Extracellular; it reads GMEQIT. A helical; Voltage-sensor membrane pass occupies residues 875-898; the sequence is AFRSLRTLRALRPLRAVSRWQGMK. Residues 899-915 lie on the Cytoplasmic side of the membrane; sequence IIVNALMLSIPSIFNVL. Residues 916-937 traverse the membrane as a helical segment; the sequence is LVCVVFWLIFAIMGVQLFAGKF. Residues 938 to 976 are Extracellular-facing; the sequence is YKCVNETNMRIPPTEVANKIECYNKNYTWVNSNVNFDNV. 2 N-linked (GlcNAc...) asparagine glycosylation sites follow: Asn-942 and Asn-963. The pore-forming intramembrane region spans 977–998; the sequence is GGAFLALFQVATFEGWMEIMAD. Topologically, residues 999 to 1009 are extracellular; the sequence is AVDVTEVDEQP. The helical transmembrane segment at 1010–1022 threads the bilayer; the sequence is KFEATVYYYFYFV. The Cytoplasmic portion of the chain corresponds to 1023 to 1100; the sequence is LFIIFGSFFV…QAVVYDLVMS (78 aa). Position 1076 is a phosphothreonine; by PKC (Thr-1076). The IV repeat unit spans residues 1083–1386; that stretch reads VKRPKNKCQA…WEQYDPLATQ (304 aa). A helical membrane pass occupies residues 1101–1120; the sequence is NQFEIFITTIIITNMIFMAF. At 1121–1132 the chain is on the extracellular side; it reads EHYNQSEVVTEV. N-linked (GlcNAc...) asparagine glycosylation is present at Asn-1124. The chain crosses the membrane as a helical span at residues 1133 to 1154; sequence LATANIAFTILYAVEAIIKIIG. Over 1155 to 1162 the chain is Cytoplasmic; sequence LRIHYLRN. A helical membrane pass occupies residues 1163 to 1184; sequence LWNVFDFLVVTLSVMDAFLNDI. The Extracellular segment spans residues 1185-1194; sequence FGDGIFMNPS. Residues 1195 to 1218 traverse the membrane as a helical; Voltage-sensor segment; it reads LLRVARMFRIGRIIRLIKWAKGMR. Topologically, residues 1219-1236 are cytoplasmic; sequence KLLFALVISLPALFNIGA. A helical membrane pass occupies residues 1237-1258; the sequence is LLMLVMFIYTIIGMSSFGQIKL. Over 1259-1270 the chain is Extracellular; the sequence is SGALNDQVNFQT. Positions 1271–1293 form an intramembrane region, pore-forming; sequence FGKTFLLLVRLATSAGWNDILGP. The Extracellular segment spans residues 1294–1323; that stretch reads LLIQPPNCDPNYITTSTGEKIKVVNGDCGM. Residues 1324–1346 traverse the membrane as a helical segment; sequence PWLAISYMVSYIIIVFMIVFNMY. Topologically, residues 1347–1522 are cytoplasmic; that stretch reads IAVILENFNQ…FIISAPETAV (176 aa).

This sequence belongs to the sodium channel (TC 1.A.1.10) family.

The protein resides in the cell membrane. In terms of biological role, mediates the voltage-dependent sodium ion permeability of excitable membranes. Assuming opened or closed conformations in response to the voltage difference across the membrane, the protein forms a sodium-selective channel through which Na(+) ions may pass in accordance with their electrochemical gradient. The sequence is that of Sodium channel protein 1 brain from Heterololigo bleekeri (Spear squid).